Reading from the N-terminus, the 260-residue chain is Ribosomal RNA small subunit methyltransferase J (260 aa).

S-adenosyl-L-methionine is bound by residues 125 to 126 (ER) and aspartate 179.

The protein belongs to the methyltransferase superfamily. RsmJ family.

The protein resides in the cytoplasm. The enzyme catalyses guanosine(1516) in 16S rRNA + S-adenosyl-L-methionine = N(2)-methylguanosine(1516) in 16S rRNA + S-adenosyl-L-homocysteine + H(+). Its function is as follows. Specifically methylates the guanosine in position 1516 of 16S rRNA. This Pseudomonas entomophila (strain L48) protein is Ribosomal RNA small subunit methyltransferase J.